A 76-amino-acid polypeptide reads, in one-letter code: Putative membrane protein insertion efficiency factor (76 aa).

Belongs to the UPF0161 family.

It localises to the cell inner membrane. Its function is as follows. Could be involved in insertion of integral membrane proteins into the membrane. This Anaeromyxobacter dehalogenans (strain 2CP-C) protein is Putative membrane protein insertion efficiency factor.